The chain runs to 350 residues: Neutral protease 2 homolog SNOG_10522 (350 aa).

A signal peptide spans 1 to 18 (MKVSSQLAVAALASFATA). Residues 19–180 (ASVDVHKRET…AKALNKRTAI (162 aa)) constitute a propeptide that is removed on maturation. 2 cysteine pairs are disulfide-bonded: Cys184–Cys251 and Cys258–Cys276. His301 is a binding site for Zn(2+). Glu302 is an active-site residue. Residues His305 and Asp316 each contribute to the Zn(2+) site.

This sequence belongs to the peptidase M35 family. Requires Zn(2+) as cofactor.

The protein localises to the secreted. The catalysed reaction is Preferential cleavage of bonds with hydrophobic residues in P1'. Also 3-Asn-|-Gln-4 and 8-Gly-|-Ser-9 bonds in insulin B chain.. Secreted metalloproteinase that allows assimilation of proteinaceous substrates. Shows high activities on basic nuclear substrates such as histone and protamine. In Phaeosphaeria nodorum (strain SN15 / ATCC MYA-4574 / FGSC 10173) (Glume blotch fungus), this protein is Neutral protease 2 homolog SNOG_10522.